The primary structure comprises 837 residues: Protein translocase subunit SecA 1 (837 aa).

Residues Gln-85, 103-107, and Asp-493 each bind ATP; that span reads GEGKT. The Zn(2+) site is built by Cys-821, Cys-823, Cys-832, and His-833.

The protein belongs to the SecA family. As to quaternary structure, monomer and homodimer. Part of the essential Sec protein translocation apparatus which comprises SecA, SecYEG and auxiliary proteins SecDF. Other proteins may also be involved. Requires Zn(2+) as cofactor.

The protein localises to the cell membrane. The protein resides in the cytoplasm. The catalysed reaction is ATP + H2O + cellular proteinSide 1 = ADP + phosphate + cellular proteinSide 2.. Its function is as follows. Part of the Sec protein translocase complex. Interacts with the SecYEG preprotein conducting channel. Has a central role in coupling the hydrolysis of ATP to the transfer of proteins into and across the cell membrane, serving as an ATP-driven molecular motor driving the stepwise translocation of polypeptide chains across the membrane. The sequence is that of Protein translocase subunit SecA 1 from Streptococcus pneumoniae serotype 4 (strain ATCC BAA-334 / TIGR4).